Reading from the N-terminus, the 463-residue chain is Soluble pyridine nucleotide transhydrogenase (463 aa).

Residue 35 to 44 coordinates FAD; that stretch reads EKQQAVGGNC.

Belongs to the class-I pyridine nucleotide-disulfide oxidoreductase family. FAD serves as cofactor.

The protein resides in the cytoplasm. The catalysed reaction is NAD(+) + NADPH = NADH + NADP(+). In terms of biological role, conversion of NADPH, generated by peripheral catabolic pathways, to NADH, which can enter the respiratory chain for energy generation. The protein is Soluble pyridine nucleotide transhydrogenase of Chromohalobacter salexigens (strain ATCC BAA-138 / DSM 3043 / CIP 106854 / NCIMB 13768 / 1H11).